The primary structure comprises 541 residues: Nectin 1b (541 aa).

The N-terminal stretch at 1–21 (MDKQESFFVGHKSHRCSQNRS) is a signal peptide. Residues 22 to 396 (VSQIHQRTSR…PAELHSSGAA (375 aa)) are Extracellular-facing. N-linked (GlcNAc...) asparagine glycosylation is found at Asn51, Asn105, Asn180, Asn242, Asn326, Asn337, and Asn372. One can recognise an Ig-like V-type domain in the interval 77 to 182 (GDTVELKCLF…GNRENMVNLT (106 aa)). Cys84 and Cys165 are oxidised to a cystine. 2 Ig-like C2-type domains span residues 187–282 (PVTK…VILN) and 287–374 (PEVK…VNVT). Disulfide bonds link Cys212/Cys266 and Cys309/Cys356. A helical membrane pass occupies residues 397–417 (IGGAVGGVALLVAAIALLVFF). Over 418 to 541 (LRRRQRTFKG…SVISKKEWYV (124 aa)) the chain is Cytoplasmic. Residues 440 to 507 (YSKAGGMPAH…VDEGESRDYD (68 aa)) form a disordered region. Over residues 479-493 (SGDRDFDGNSEDLKR) the composition is skewed to basic and acidic residues.

The protein belongs to the nectin family. As to quaternary structure, cis- and trans-homodimer. Can form trans-heterodimers. In terms of tissue distribution, expressed in the developing eye and nervous system.

Its subcellular location is the cell membrane. The protein localises to the cell junction. The protein resides in the adherens junction. Its function is as follows. Cell adhesion molecule that promotes cell-cell contacts and plays important roles in the development of the nervous system. Acts by forming homophilic or heterophilic trans-dimers. This chain is Nectin 1b, found in Danio rerio (Zebrafish).